Consider the following 345-residue polypeptide: Phenylalanine--tRNA ligase alpha subunit (345 aa).

E253 is a Mg(2+) binding site.

Belongs to the class-II aminoacyl-tRNA synthetase family. Phe-tRNA synthetase alpha subunit type 1 subfamily. In terms of assembly, tetramer of two alpha and two beta subunits. Mg(2+) is required as a cofactor.

It is found in the cytoplasm. It catalyses the reaction tRNA(Phe) + L-phenylalanine + ATP = L-phenylalanyl-tRNA(Phe) + AMP + diphosphate + H(+). In Lawsonia intracellularis (strain PHE/MN1-00), this protein is Phenylalanine--tRNA ligase alpha subunit.